The following is a 136-amino-acid chain: Histone H3.3 (136 aa).

A disordered region spans residues 1-42 (MARTKQTARKSTGGKAPRKQLASKAARKSAPVSGGVKKPHRY). An N6,N6,N6-trimethyllysine; alternate modification is found at K5. N6,N6-dimethyllysine; alternate is present on K5. N6-methyllysine; alternate is present on residues K5 and K10. K10 is subject to N6-acetyllysine; alternate. S11 is subject to Phosphoserine. The residue at position 15 (K15) is an N6,N6-dimethyllysine; alternate. N6-acetyllysine; alternate occurs at positions 15, 19, 24, 28, and 37. N6-methyllysine; alternate occurs at positions 19, 24, 28, and 37. 2 positions are modified to N6,N6,N6-trimethyllysine; alternate: K28 and K37. An N6,N6-dimethyllysine; alternate mark is found at K28 and K37. K57 and K65 each carry N6-acetyllysine. N6,N6,N6-trimethyllysine; alternate is present on K80. At K80 the chain carries N6,N6-dimethyllysine; alternate. K80 is modified (N6-methyllysine; alternate).

The protein belongs to the histone H3 family. The nucleosome is a histone octamer containing two molecules each of H2A, H2B, H3 and H4 assembled in one H3-H4 heterotetramer and two H2A-H2B heterodimers. The octamer wraps approximately 147 bp of DNA. Phosphorylated to form H3S10ph. H3S10ph promotes subsequent H3K14ac formation and is required for transcriptional activation through TBP recruitment to the promoters. In terms of processing, mono-, di- and trimethylated by the COMPASS complex to form H3K4me1/2/3. H3K4me activates gene expression by regulating transcription elongation and plays a role in telomere length maintenance. H3K4me enrichment correlates with transcription levels, and occurs in a 5' to 3' gradient with H3K4me3 enrichment at the 5'-end of genes, shifting to H3K4me2 and then H3K4me1. Methylated by SET2 to form H3K36me. H3K36me represses gene expression. Methylated by DOT1 to form H3K79me. H3K79me is required for association of SIR proteins with telomeric regions and for telomeric silencing. The COMPASS-mediated formation of H3K4me2/3 and the DOT1-mediated formation of H3K79me require H2BK123ub1. Post-translationally, acetylation of histone H3 leads to transcriptional activation. H3K14ac formation by GCN5 is promoted by H3S10ph. H3K14ac can also be formed by ESA1. H3K56ac formation occurs predominantly in newly synthesized H3 molecules during G1, S and G2/M of the cell cycle and may be involved in DNA repair.

The protein localises to the nucleus. The protein resides in the chromosome. Its function is as follows. Core component of nucleosome. Nucleosomes wrap and compact DNA into chromatin, limiting DNA accessibility to the cellular machineries which require DNA as a template. Histones thereby play a central role in transcription regulation, DNA repair, DNA replication and chromosomal stability. DNA accessibility is regulated via a complex set of post-translational modifications of histones, also called histone code, and nucleosome remodeling. This chain is Histone H3.3 (HHT3), found in Lodderomyces elongisporus (strain ATCC 11503 / CBS 2605 / JCM 1781 / NBRC 1676 / NRRL YB-4239) (Yeast).